The primary structure comprises 361 residues: Inhibin alpha chain (361 aa).

A signal peptide spans 1 to 21; sequence MLPLLLPLQLLLLMVMKGGHG. A propeptide spanning residues 22–64 is cleaved from the precursor; the sequence is CQGPELDRELVLAKVRALVLDALGPPNASKDGGKPVAQRLTRR. The interval 45-82 is disordered; sequence GPPNASKDGGKPVAQRLTRRHAHTGGSTRRSMENEDED. Residues Asn48, Asn144, and Asn266 are each glycosylated (N-linked (GlcNAc...) asparagine). Residues 65-230 constitute a propeptide, inhibin alpha N-terminal region; the sequence is HAHTGGSTRR…PPSVGERARR (166 aa). Disulfide bonds link Cys260/Cys323, Cys289/Cys358, and Cys293/Cys360.

Belongs to the TGF-beta family. Dimeric, linked by one or more disulfide bonds. Activin B is a dimer of alpha and beta-B. Inhibin A is a dimer of alpha and beta-A. Inhibin B is a dimer of alpha and beta-B. Interacts with TGFBR3L; this interaction regulates female fertility. In terms of processing, proteolytic processing yields a number of bioactive forms, consisting either solely of the mature alpha chain, of the most N-terminal propeptide linked through a disulfide bond to the mature alpha chain, or of the entire proprotein.

It is found in the secreted. Its function is as follows. Inhibins and activins inhibit and activate, respectively, the secretion of follitropin by the pituitary gland. Inhibins/activins are involved in regulating a number of diverse functions such as hypothalamic and pituitary hormone secretion, gonadal hormone secretion, germ cell development and maturation, erythroid differentiation, insulin secretion, nerve cell survival, embryonic axial development or bone growth, depending on their subunit composition. Inhibins appear to oppose the functions of activins. Functionally, inhibin A is a dimer of alpha/INHA and beta-A/INHBA that functions as a feedback regulator in the hypothalamic-pituitary-gonadal (HPG) axis. Inhibits the secretion of FSH from the anterior pituitary gland by acting on pituitary gonadotrope cells. Antagonizes activin A by binding to the proteoglycan, betaglycan, and forming a stable complex with and, thereby, sequestering type II activin receptors while excluding type I receptor. In terms of biological role, inhibin B is a dimer of alpha and beta-B that plays a crucial role in the regulation of the reproductive system by inhibiting the secretion of follicle-stimulating hormone (FSH) from the anterior pituitary gland. Thereby, maintains reproductive homeostasis in both males and females. Acts as a more potent suppressor of FSH release than inhibin A. Functions as competitive receptor antagonist binding activin type II receptors with high affinity in the presence of the TGF-beta type III coreceptor/TGFBR3L. This Trichosurus vulpecula (Brush-tailed possum) protein is Inhibin alpha chain (INHA).